We begin with the raw amino-acid sequence, 317 residues long: Neurogenic differentiation factor 6-B (317 aa).

2 disordered regions span residues 1–90 (MLTV…ERSR) and 297–317 (DLHP…GYHN). Acidic residues predominate over residues 37-56 (EAEDDNTDREEEEEREEDEN). A compositionally biased stretch (basic residues) spans 59 to 69 (PKKKGPRKKKS). The short motif at 65–70 (RKKKSE) is the Nuclear localization signal element. Basic and acidic residues predominate over residues 70-90 (EGRGDRVKMRRQEANARERSR). Positions 78 to 130 (MRRQEANARERSRMHGLNDALESLRKVVPCYSKTQKLSKIETLRLAKNYIWAL) constitute a bHLH domain. The span at 301 to 317 (RSQSFQSQDELNTGYHN) shows a compositional bias: polar residues.

Efficient DNA binding requires dimerization with another bHLH protein. In terms of tissue distribution, embryonic olfactory bulbs and olfactory placodes. In adult, expressed in brain and eye.

It localises to the nucleus. In terms of biological role, differentiation factor required for neurogenesis. Does not act as an upstream activator of isl1. This Danio rerio (Zebrafish) protein is Neurogenic differentiation factor 6-B.